The chain runs to 887 residues: Probable LRR receptor-like serine/threonine-protein kinase At5g59680 (887 aa).

Positions 1 to 23 (MERSLELLLLLIRTLAIIHISQA) are cleaved as a signal peptide. Over 25–510 (SQQGFISLDC…TKSGKSFPVT (486 aa)) the chain is Extracellular. 12 N-linked (GlcNAc...) asparagine glycosylation sites follow: Asn143, Asn230, Asn256, Asn289, Asn338, Asn363, Asn400, Asn416, Asn432, Asn445, Asn464, and Asn471. LRR repeat units lie at residues 411 to 434 (RITT…QNLT), 435 to 457 (TLEK…LSNM), and 459 to 481 (SLLV…LQRK). Residues 511–531 (IVASVGSAAILIVVLVLVLFL) form a helical membrane-spanning segment. The Cytoplasmic segment spans residues 532 to 887 (RKKKPSAVEV…FDAEMIPRAR (356 aa)). At Thr571 the chain carries Phosphothreonine. Residues 580–853 (NNFGRVVGEG…HVVIELKECL (274 aa)) enclose the Protein kinase domain. Residues 586–594 (VGEGGFGVV) and Lys608 contribute to the ATP site. Residue Tyr653 is modified to Phosphotyrosine. The active-site Proton acceptor is Asp705. Ser739 is subject to Phosphoserine. Phosphothreonine occurs at positions 740 and 745. Tyr753 bears the Phosphotyrosine mark.

This sequence belongs to the protein kinase superfamily. Ser/Thr protein kinase family.

It localises to the membrane. It carries out the reaction L-seryl-[protein] + ATP = O-phospho-L-seryl-[protein] + ADP + H(+). The catalysed reaction is L-threonyl-[protein] + ATP = O-phospho-L-threonyl-[protein] + ADP + H(+). The polypeptide is Probable LRR receptor-like serine/threonine-protein kinase At5g59680 (Arabidopsis thaliana (Mouse-ear cress)).